The sequence spans 68 residues: Long neurotoxin 1 (68 aa).

5 cysteine pairs are disulfide-bonded: C3–C20, C13–C41, C26–C30, C45–C56, and C57–C62.

It belongs to the three-finger toxin family. Long-chain subfamily. Type II alpha-neurotoxin sub-subfamily. Expressed by the venom gland.

The protein localises to the secreted. Functionally, binds with high affinity to muscular (alpha-1/CHRNA1) and neuronal (alpha-7/CHRNA7) nicotinic acetylcholine receptor (nAChR) and inhibits acetylcholine from binding to the receptor, thereby impairing neuromuscular and neuronal transmission. The polypeptide is Long neurotoxin 1 (Aspidelaps scutatus (Shield-nose snake)).